Consider the following 346-residue polypeptide: UDP-3-O-acylglucosamine N-acyltransferase (346 aa).

The active-site Proton acceptor is histidine 253.

This sequence belongs to the transferase hexapeptide repeat family. LpxD subfamily. As to quaternary structure, homotrimer.

It carries out the reaction a UDP-3-O-[(3R)-3-hydroxyacyl]-alpha-D-glucosamine + a (3R)-hydroxyacyl-[ACP] = a UDP-2-N,3-O-bis[(3R)-3-hydroxyacyl]-alpha-D-glucosamine + holo-[ACP] + H(+). Its pathway is bacterial outer membrane biogenesis; LPS lipid A biosynthesis. In terms of biological role, catalyzes the N-acylation of UDP-3-O-acylglucosamine using 3-hydroxyacyl-ACP as the acyl donor. Is involved in the biosynthesis of lipid A, a phosphorylated glycolipid that anchors the lipopolysaccharide to the outer membrane of the cell. The protein is UDP-3-O-acylglucosamine N-acyltransferase of Rickettsia prowazekii (strain Madrid E).